The following is a 238-amino-acid chain: DNA repair protein RecO (238 aa).

The protein belongs to the RecO family.

Involved in DNA repair and RecF pathway recombination. The polypeptide is DNA repair protein RecO (Anaplasma marginale (strain St. Maries)).